Reading from the N-terminus, the 105-residue chain is Large ribosomal subunit protein eL30 (105 aa).

Belongs to the eukaryotic ribosomal protein eL30 family.

In Methanococcus vannielii (strain ATCC 35089 / DSM 1224 / JCM 13029 / OCM 148 / SB), this protein is Large ribosomal subunit protein eL30 (rpl30e).